A 500-amino-acid chain; its full sequence is NAD(P)H-quinone oxidoreductase chain 4, chloroplastic (500 aa).

14 consecutive transmembrane segments (helical) span residues 4 to 24 (FPWLTIIVVFPISAGSLMLFL), 35 to 55 (YTICICILELLITTYAFCYNF), 87 to 107 (IGTILLTGFITTLATLAAFPV), 113 to 130 (LFHFLMLAMYSGQIGSFS), 134 to 154 (LLLFFIMWELELIPVYLLLSM), 167 to 187 (FILYTAGSSIFLLIGVLGISL), 211 to 231 (IILYIGFLIAFAVKSPLIPLH), 242 to 262 (HYSTCMLLAGILLKMGAYGLV), 272 to 292 (AHSLFSPWLMVVGTIQIIYAA), 305 to 325 (IAYSSVSHMGFIIIGIASITD), 330 to 350 (GAILQIISHGFIGAALFFLAG), 386 to 406 (LALPGMSGFVAEFIVFFGIIT), 416 to 436 (IFIIVVMAIGMILTPIYLLSM), and 462 to 482 (LFLSISSLLPIIGMGIYPDFV).

The protein belongs to the complex I subunit 4 family.

The protein resides in the plastid. It is found in the chloroplast thylakoid membrane. The catalysed reaction is a plastoquinone + NADH + (n+1) H(+)(in) = a plastoquinol + NAD(+) + n H(+)(out). The enzyme catalyses a plastoquinone + NADPH + (n+1) H(+)(in) = a plastoquinol + NADP(+) + n H(+)(out). This is NAD(P)H-quinone oxidoreductase chain 4, chloroplastic from Aethionema cordifolium (Lebanon stonecress).